The chain runs to 306 residues: Mitochondrial brown fat uncoupling protein 1 (306 aa).

Over 1–10 the chain is Mitochondrial intermembrane; it reads MVGTTTTDVP. A helical membrane pass occupies residues 11 to 32; it reads PTMGVKIFSAGVAACLADVITF. Solcar repeat units follow at residues 11 to 102, 110 to 200, and 209 to 294; these read PTMG…VQEF, PSLG…MKGA, and DDVP…LKGE. Residues 33–73 lie on the Mitochondrial matrix side of the membrane; the sequence is PLDTAKVRQQIQGEFPITSGIRYKGVLGTITTLAKTEGPLK. Lysine 56 serves as a coordination point for fatty acid 16:0. The chain crosses the membrane as a helical span at residues 74–96; the sequence is LYSGLPAGLQRQISFASLRIGLY. The Mitochondrial intermembrane segment spans residues 97-115; sequence DTVQEFFTSGEETPSLGSK. A helical membrane pass occupies residues 116-132; the sequence is ISAGLTTGGVAVFIGQP. Residues 133–177 are Mitochondrial matrix-facing; sequence TEVVKVRLQAQSHLHGLKPRYTGTYNAYRIIATTESLTSLWKGTT. A helical membrane pass occupies residues 178–194; the sequence is PNLLRNVIINCTELVTY. Residues 195–211 are Mitochondrial intermembrane-facing; it reads DLMKGALVRNEILADDV. A helical membrane pass occupies residues 212–231; sequence PCHFVSALIAGFCTTLLSSP. Over 232–265 the chain is Mitochondrial matrix; the sequence is VDVVKTRFINSPPGQYASVPNCAMTMFTKEGPTA. Cysteine 253 carries the cysteine sulfenic acid (-SOH) modification. A helical transmembrane segment spans residues 266–288; it reads FFKGFVPSFLRLGSWNVIMFVCF. Lysine 268 lines the fatty acid 16:0 pocket. Topologically, residues 289-306 are mitochondrial intermembrane; the sequence is EKLKGELMRSRQTVDCAT.

Belongs to the mitochondrial carrier (TC 2.A.29) family. Most probably functions as a monomer. Binds one purine nucleotide per monomer. However, has also been suggested to function as a homodimer or a homotetramer. Tightly associates with cardiolipin in the mitochondrion inner membrane; may stabilize and regulate its activity. Post-translationally, may undergo sulfenylation upon cold exposure. May increase the sensitivity of UCP1 thermogenic function to the activation by noradrenaline probably through structural effects. In terms of processing, may undergo ubiquitin-mediated proteasomal degradation. Brown adipose tissue.

Its subcellular location is the mitochondrion inner membrane. The catalysed reaction is H(+)(in) = H(+)(out). With respect to regulation, has no constitutive proton transporter activity and has to be activated by long-chain fatty acids/LCFAs. Inhibited by purine nucleotides. Both purine nucleotides and LCFAs bind the cytosolic side of the transporter and directly compete to activate or inhibit it. Activated by noradrenaline and reactive oxygen species. Despite lacking canonical translational encoding for selenocysteine, a small pool of the protein has been observed to selectively incorporate selenocysteine at 'Cys-253'. Selenocysteine-modified protein is highly sensitive to redox modification and may constitute a pool of protein highly sensitive to activation by elevated levels of reactive oxygen species (ROS). Functionally, mitochondrial protein responsible for thermogenic respiration, a specialized capacity of brown adipose tissue and beige fat that participates in non-shivering adaptive thermogenesis to temperature and diet variations and more generally to the regulation of energy balance. Functions as a long-chain fatty acid/LCFA and proton symporter, simultaneously transporting one LCFA and one proton through the inner mitochondrial membrane. However, LCFAs remaining associated with the transporter via their hydrophobic tails, it results in an apparent transport of protons activated by LCFAs. Thereby, dissipates the mitochondrial proton gradient and converts the energy of substrate oxydation into heat instead of ATP. Regulates the production of reactive oxygen species/ROS by mitochondria. The sequence is that of Mitochondrial brown fat uncoupling protein 1 from Oryctolagus cuniculus (Rabbit).